A 310-amino-acid polypeptide reads, in one-letter code: MSLEPKIPLPNSLQKPLSRFYEYLRSEKGLSLHTQRNYKQQLETMAAHLVTLGLKDWSQVDAAWVRQLASKGMREGMKASSIATRLSSLRSFFDFLVLRGEMTANPAKGVSAPRKQRPLPKNLDVDEVGQLLDVNEDDPLSIRDRAMMEVMYGAGLRLAELVGINLKDVLGRQGEIRVIGKGDKERKAPFSGLAKEWVDKWLKVRGALASPGETALFVSKLGTRISHRSVQKRMEEWGKKQSVASHISPHKLRHSFATHVLESSQNLRAVQELLGHENISTTQVYTHLDFQHLAQAYDQAHPRARKKNKD.

Residues 11–97 enclose the Core-binding (CB) domain; it reads NSLQKPLSRF…SLRSFFDFLV (87 aa). The Tyr recombinase domain occupies 118 to 298; the sequence is PLPKNLDVDE…DFQHLAQAYD (181 aa). Residues arginine 157, lysine 181, histidine 250, arginine 253, and histidine 276 contribute to the active site. Tyrosine 285 (O-(3'-phospho-DNA)-tyrosine intermediate) is an active-site residue.

The protein belongs to the 'phage' integrase family. XerC subfamily. Forms a cyclic heterotetrameric complex composed of two molecules of XerC and two molecules of XerD.

It is found in the cytoplasm. In terms of biological role, site-specific tyrosine recombinase, which acts by catalyzing the cutting and rejoining of the recombining DNA molecules. The XerC-XerD complex is essential to convert dimers of the bacterial chromosome into monomers to permit their segregation at cell division. It also contributes to the segregational stability of plasmids. The polypeptide is Tyrosine recombinase XerC (Vibrio atlanticus (strain LGP32) (Vibrio splendidus (strain Mel32))).